Reading from the N-terminus, the 389-residue chain is Lipid-A-disaccharide synthase (389 aa).

This sequence belongs to the LpxB family.

It catalyses the reaction a lipid X + a UDP-2-N,3-O-bis[(3R)-3-hydroxyacyl]-alpha-D-glucosamine = a lipid A disaccharide + UDP + H(+). Its pathway is bacterial outer membrane biogenesis; LPS lipid A biosynthesis. Functionally, condensation of UDP-2,3-diacylglucosamine and 2,3-diacylglucosamine-1-phosphate to form lipid A disaccharide, a precursor of lipid A, a phosphorylated glycolipid that anchors the lipopolysaccharide to the outer membrane of the cell. This Burkholderia lata (strain ATCC 17760 / DSM 23089 / LMG 22485 / NCIMB 9086 / R18194 / 383) protein is Lipid-A-disaccharide synthase.